The following is a 320-amino-acid chain: Adhesin MafA 1 (320 aa).

Positions methionine 1 to alanine 18 are cleaved as a signal peptide. The N-palmitoyl cysteine moiety is linked to residue cysteine 19. Cysteine 19 carries S-diacylglycerol cysteine lipidation. Positions histidine 288–proline 320 are disordered.

It belongs to the MafA family.

The protein resides in the cell outer membrane. This is Adhesin MafA 1 (mafA1) from Neisseria meningitidis serogroup A / serotype 4A (strain DSM 15465 / Z2491).